The primary structure comprises 510 residues: ATP synthase subunit alpha (510 aa).

An ATP-binding site is contributed by 169–176; it reads GDRQTGKT.

Belongs to the ATPase alpha/beta chains family. In terms of assembly, F-type ATPases have 2 components, CF(1) - the catalytic core - and CF(0) - the membrane proton channel. CF(1) has five subunits: alpha(3), beta(3), gamma(1), delta(1), epsilon(1). CF(0) has four main subunits: a(1), b(1), b'(1) and c(9-12).

It localises to the cell inner membrane. The enzyme catalyses ATP + H2O + 4 H(+)(in) = ADP + phosphate + 5 H(+)(out). In terms of biological role, produces ATP from ADP in the presence of a proton gradient across the membrane. The alpha chain is a regulatory subunit. In Rhodopseudomonas palustris (strain BisB18), this protein is ATP synthase subunit alpha.